We begin with the raw amino-acid sequence, 201 residues long: MYKLTTRQQEVLDLIKSHIEDTGYPPTRAEIANQLGFRSANAAEEHLKALARKGAIEMVPGASRGIRLPETIQGIPLIGRVAAGNPILAEQNIEDYCDVPPDFFYPQANYLLKVQGMSMRDAGILDGDLLAVHSTTQVKNGDIVVARIEDEVTVKRFKRERNNATIQLLPENPDFNIIEVDLRDANFSIEGLSVGIIRREL.

The segment at residues 28–48 is a DNA-binding region (H-T-H motif); the sequence is RAEIANQLGFRSANAAEEHLK. Catalysis depends on for autocatalytic cleavage activity residues serine 118 and lysine 155.

It belongs to the peptidase S24 family. In terms of assembly, homodimer.

The enzyme catalyses Hydrolysis of Ala-|-Gly bond in repressor LexA.. Its function is as follows. Represses a number of genes involved in the response to DNA damage (SOS response), including recA and lexA. In the presence of single-stranded DNA, RecA interacts with LexA causing an autocatalytic cleavage which disrupts the DNA-binding part of LexA, leading to derepression of the SOS regulon and eventually DNA repair. In Saccharophagus degradans (strain 2-40 / ATCC 43961 / DSM 17024), this protein is LexA repressor.